The chain runs to 379 residues: Sensor histidine kinase YhcY (379 aa).

The 189-residue stretch at 185-373 folds into the Histidine kinase domain; it reads RLAQELHDSV…KLSIRLPLKS (189 aa). A Phosphohistidine; by autocatalysis modification is found at His191.

It carries out the reaction ATP + protein L-histidine = ADP + protein N-phospho-L-histidine.. In terms of biological role, member of the two-component regulatory system YhcY/YhcZ. Probably activates YhcZ by phosphorylation. The sequence is that of Sensor histidine kinase YhcY (yhcY) from Bacillus subtilis (strain 168).